The following is a 566-amino-acid chain: Beta,beta-carotene 15,15'-dioxygenase (566 aa).

Fe cation contacts are provided by H172, H237, H308, and H514. The tract at residues 529–566 (TPAKTQEDENSDHPTGLTAPGLGHGENDFTAGHGGKSL) is disordered.

This sequence belongs to the carotenoid oxygenase family. The cofactor is Fe(2+).

Its subcellular location is the cytoplasm. The protein resides in the cytosol. The catalysed reaction is all-trans-beta-carotene + O2 = 2 all-trans-retinal. The protein operates within cofactor metabolism; retinol metabolism. Its function is as follows. Symmetrically cleaves beta-carotene into two molecules of retinal using a dioxygenase mechanism. This Rattus norvegicus (Rat) protein is Beta,beta-carotene 15,15'-dioxygenase.